A 310-amino-acid chain; its full sequence is MNTQARLTSTQWKARFKGYVQVTKPGIIFGNLISVAGGFLLAAKGDVDLVLMLASLVGLSLVVASGCAINNCIDRDIDAKMQRTCKRVTVTGEIPLSHVLLFGIALGVLGFGILALFTNTLALLFAAIGYVVYVGIYSLYMKRNSVYGTLVGSFSGAVPPVVGYCSVTGQMDMGAVILLLMFSLWQMPHSYAIAIFRFNDYAAAKIPVLPVAEGMAKAKHHIVLYIAVFALVSTMLPLAGYTGTAFMAVTCATSLWWLTMALKGYRQDVDMPRWARQVFGFSIITITALSVTMALDFQAVSQTPLFTLVR.

Transmembrane regions (helical) follow at residues 25–45 (PGIIFGNLISVAGGFLLAAKG), 49–69 (LVLMLASLVGLSLVVASGCAI), 98–118 (HVLLFGIALGVLGFGILALFT), 121–141 (LALLFAAIGYVVYVGIYSLYM), 145–165 (SVYGTLVGSFSGAVPPVVGYC), 176–196 (VILLLMFSLWQMPHSYAIAIF), 222–242 (IVLYIAVFALVSTMLPLAGYT), 245–265 (AFMAVTCATSLWWLTMALKGY), and 277–297 (QVFGFSIITITALSVTMALDF).

Belongs to the UbiA prenyltransferase family. Protoheme IX farnesyltransferase subfamily.

Its subcellular location is the cell inner membrane. It carries out the reaction heme b + (2E,6E)-farnesyl diphosphate + H2O = Fe(II)-heme o + diphosphate. Its pathway is porphyrin-containing compound metabolism; heme O biosynthesis; heme O from protoheme: step 1/1. Converts heme B (protoheme IX) to heme O by substitution of the vinyl group on carbon 2 of heme B porphyrin ring with a hydroxyethyl farnesyl side group. In Shewanella sp. (strain MR-4), this protein is Protoheme IX farnesyltransferase 2.